The sequence spans 315 residues: tRNA dimethylallyltransferase (315 aa).

11-18 (GPTASGKS) is an ATP binding site. Position 13-18 (13-18 (TASGKS)) interacts with substrate. 2 interaction with substrate tRNA regions span residues 36–39 (DSMQ) and 160–164 (QRLIR).

The protein belongs to the IPP transferase family. As to quaternary structure, monomer. Mg(2+) serves as cofactor.

It catalyses the reaction adenosine(37) in tRNA + dimethylallyl diphosphate = N(6)-dimethylallyladenosine(37) in tRNA + diphosphate. Functionally, catalyzes the transfer of a dimethylallyl group onto the adenine at position 37 in tRNAs that read codons beginning with uridine, leading to the formation of N6-(dimethylallyl)adenosine (i(6)A). This chain is tRNA dimethylallyltransferase, found in Rickettsia bellii (strain OSU 85-389).